The chain runs to 433 residues: 3-phosphoshikimate 1-carboxyvinyltransferase (433 aa).

Lys-22, Ser-23, and Arg-27 together coordinate 3-phosphoshikimate. Lys-22 provides a ligand contact to phosphoenolpyruvate. Phosphoenolpyruvate-binding residues include Gly-96 and Arg-129. Positions 175, 176, 177, 203, 318, 341, and 345 each coordinate 3-phosphoshikimate. A phosphoenolpyruvate-binding site is contributed by Gln-177. Asp-318 acts as the Proton acceptor in catalysis. Phosphoenolpyruvate contacts are provided by Arg-349, Arg-393, and Lys-418.

It belongs to the EPSP synthase family. Monomer.

The protein localises to the cytoplasm. It catalyses the reaction 3-phosphoshikimate + phosphoenolpyruvate = 5-O-(1-carboxyvinyl)-3-phosphoshikimate + phosphate. It functions in the pathway metabolic intermediate biosynthesis; chorismate biosynthesis; chorismate from D-erythrose 4-phosphate and phosphoenolpyruvate: step 6/7. In terms of biological role, catalyzes the transfer of the enolpyruvyl moiety of phosphoenolpyruvate (PEP) to the 5-hydroxyl of shikimate-3-phosphate (S3P) to produce enolpyruvyl shikimate-3-phosphate and inorganic phosphate. This Mannheimia succiniciproducens (strain KCTC 0769BP / MBEL55E) protein is 3-phosphoshikimate 1-carboxyvinyltransferase.